Here is an 81-residue protein sequence, read N- to C-terminus: Spore coat protein F-like protein YraG (81 aa).

It belongs to the CotF family.

It localises to the spore coat. The protein is Spore coat protein F-like protein YraG (yraG) of Bacillus subtilis (strain 168).